The chain runs to 502 residues: Probable cytosol aminopeptidase (502 aa).

Positions 270 and 275 each coordinate Mn(2+). The active site involves lysine 282. Residues aspartate 293, aspartate 352, and glutamate 354 each coordinate Mn(2+). Arginine 356 is an active-site residue.

This sequence belongs to the peptidase M17 family. Mn(2+) serves as cofactor.

It localises to the cytoplasm. It carries out the reaction Release of an N-terminal amino acid, Xaa-|-Yaa-, in which Xaa is preferably Leu, but may be other amino acids including Pro although not Arg or Lys, and Yaa may be Pro. Amino acid amides and methyl esters are also readily hydrolyzed, but rates on arylamides are exceedingly low.. It catalyses the reaction Release of an N-terminal amino acid, preferentially leucine, but not glutamic or aspartic acids.. In terms of biological role, presumably involved in the processing and regular turnover of intracellular proteins. Catalyzes the removal of unsubstituted N-terminal amino acids from various peptides. The sequence is that of Probable cytosol aminopeptidase from Buchnera aphidicola subsp. Schizaphis graminum (strain Sg).